A 186-amino-acid polypeptide reads, in one-letter code: Cytochrome c oxidase subunit 4, mitochondrial (186 aa).

The transit peptide at 1–31 (MLLSRTAVAVARRATAAPALRRSIATTVVRC) directs the protein to the mitochondrion. The Zn(2+) site is built by cysteine 118, histidine 126, cysteine 142, and cysteine 145.

This sequence belongs to the cytochrome c oxidase subunit 5B family. As to quaternary structure, component of the cytochrome c oxidase (complex IV, CIV), a multisubunit enzyme composed of 11 subunits. The complex is composed of a catalytic core of 3 subunits Cox1, Cox2 and Cox3, encoded in the mitochondrial DNA, and 8 supernumerary subunits Cox4, Cox5a/Cox5, Cox6, Cox7, Cox8, Cox7a/Cox9, Cox6b/Cox12 and Cox6a/Cox13, which are encoded in the nuclear genome. The complex exists as a monomer or a dimer and forms respiratory supercomplexes (SCs) in the inner mitochondrial membrane with NADH-ubiquinone oxidoreductase (complex I, CI) and ubiquinol-cytochrome c oxidoreductase (cytochrome b-c1 complex, complex III, CIII), resulting in various different assemblies (supercomplexes I(1)IV(1), I(1)III(3)IV(2), III(2)IV(1) and III(2)IV(2) as well as larger supercomplexes of compositions like I(1)III(2)IV(5-6)).

Its subcellular location is the mitochondrion inner membrane. Its pathway is energy metabolism; oxidative phosphorylation. In terms of biological role, component of the cytochrome c oxidase, the last enzyme in the mitochondrial electron transport chain which drives oxidative phosphorylation. The respiratory chain contains 3 multisubunit complexes succinate dehydrogenase (complex II, CII), ubiquinol-cytochrome c oxidoreductase (cytochrome b-c1 complex, complex III, CIII) and cytochrome c oxidase (complex IV, CIV), that cooperate to transfer electrons derived from NADH and succinate to molecular oxygen, creating an electrochemical gradient over the inner membrane that drives transmembrane transport and the ATP synthase. Cytochrome c oxidase is the component of the respiratory chain that catalyzes the reduction of oxygen to water. Electrons originating from reduced cytochrome c in the intermembrane space (IMS) are transferred via the dinuclear copper A center (CU(A)) of Cox2 and heme A of Cox1 to the active site in Cox1, a binuclear center (BNC) formed by heme A3 and copper B (CU(B)). The BNC reduces molecular oxygen to 2 water molecules using 4 electrons from cytochrome c in the IMS and 4 protons from the mitochondrial matrix. The polypeptide is Cytochrome c oxidase subunit 4, mitochondrial (cox-4) (Neurospora crassa (strain ATCC 24698 / 74-OR23-1A / CBS 708.71 / DSM 1257 / FGSC 987)).